The sequence spans 408 residues: Aminomethyltransferase, mitochondrial (408 aa).

The transit peptide at 1-30 directs the protein to the mitochondrion; that stretch reads MRGGGLWQLGQSVTRRLAQAEKKVIARRCF. Substrate is bound by residues Glu-235, Arg-266, and Tyr-404.

The protein belongs to the GcvT family. As to quaternary structure, the glycine cleavage system is composed of four proteins: P, T, L and H.

Its subcellular location is the mitochondrion. It carries out the reaction N(6)-[(R)-S(8)-aminomethyldihydrolipoyl]-L-lysyl-[protein] + (6S)-5,6,7,8-tetrahydrofolate = N(6)-[(R)-dihydrolipoyl]-L-lysyl-[protein] + (6R)-5,10-methylene-5,6,7,8-tetrahydrofolate + NH4(+). Its function is as follows. The glycine cleavage system catalyzes the degradation of glycine. This Mesembryanthemum crystallinum (Common ice plant) protein is Aminomethyltransferase, mitochondrial (GDCST).